The following is a 221-amino-acid chain: Small ribosomal subunit protein uS2c (221 aa).

This sequence belongs to the universal ribosomal protein uS2 family.

The protein resides in the plastid. It localises to the chloroplast. This chain is Small ribosomal subunit protein uS2c (rps2), found in Cyanidioschyzon merolae (strain NIES-3377 / 10D) (Unicellular red alga).